A 363-amino-acid chain; its full sequence is Glutamate--cysteine ligase (363 aa).

Belongs to the glutamate--cysteine ligase type 2 family. YbdK subfamily.

It catalyses the reaction L-cysteine + L-glutamate + ATP = gamma-L-glutamyl-L-cysteine + ADP + phosphate + H(+). Functionally, catalyzes the synthesis of gamma-glutamylcysteine (gamma-GC), the main low-molecular-weight thiol compound instead of glutathione in halophilic archaea. This chain is Glutamate--cysteine ligase, found in Haloquadratum walsbyi (strain DSM 16790 / HBSQ001).